Reading from the N-terminus, the 473-residue chain is Endoglucanase B (473 aa).

The N-terminal stretch at 1-17 (MKFLNTFSLLSLAIIGS) is a signal peptide. The catalytic stretch occupies residues 18–367 (KAMKNISSKE…GLIKGLGNSI (350 aa)). The Proton donor role is filled by Glu173. Glu295 (nucleophile) is an active-site residue. The interval 365–387 (NSIKTRTTIRRTTTTTTSQSQPT) is linker. 2 CBM10 domains span residues 391–427 (SCFSVNLGYSCCNGCEVEYTDSDGEWGVENGNWCGIK) and 436–473 (ICWSEKLGYPCCQNTSSVVYTDNDGKWGVENGNWCGIY).

The protein belongs to the glycosyl hydrolase 5 (cellulase A) family.

The catalysed reaction is Endohydrolysis of (1-&gt;4)-beta-D-glucosidic linkages in cellulose, lichenin and cereal beta-D-glucans.. Functionally, rate of hydrolysis of cellulo-oligosaccharides increased with increasing chain length from cellotriose to cellopentaose. This Neocallimastix patriciarum (Rumen fungus) protein is Endoglucanase B (CELB).